We begin with the raw amino-acid sequence, 525 residues long: Chromaffin granule amine transporter (525 aa).

Residues 1–21 (MLRTILDAPQRLLKEGRASRQ) lie on the Cytoplasmic side of the membrane. The chain crosses the membrane as a helical span at residues 22-42 (LVLVVVFVALLLDNMLFTVVV). Topologically, residues 43–138 (PIVPTFLYDM…TGFLEEEITR (96 aa)) are lumenal, vesicle. N-linked (GlcNAc...) asparagine glycosylation is found at Asn-58, Asn-87, and Asn-104. Residues 139–158 (VGVLFASKAVMQLLVNPFVG) form a helical membrane-spanning segment. Residues 159 to 167 (PLTNRIGYH) are Cytoplasmic-facing. Residues 168-188 (IPMFAGFVIMFLSTVMFAFSG) form a helical membrane-spanning segment. Topologically, residues 189 to 197 (TYTLLFVAR) are lumenal, vesicle. A helical membrane pass occupies residues 198 to 218 (TLQGIGSSFSSVAGLGMLASV). At 219–227 (YTDDHERGR) the chain is on the cytoplasmic side. The helical transmembrane segment at 228-250 (AMGTALGGLALGLLVGAPFGSVM) threads the bilayer. Topologically, residues 251–256 (YEFVGK) are lumenal, vesicle. The chain crosses the membrane as a helical span at residues 257 to 279 (SAPFLILAFLALLDGALQLCILQ). The Cytoplasmic portion of the chain corresponds to 280–299 (PSKVSPESAKGTPLFMLLKD). A helical transmembrane segment spans residues 300-319 (PYILVAAGSICFANMGVAIL). The Lumenal, vesicle segment spans residues 320–335 (EPTLPIWMMQTMCSPK). Residues 336 to 360 (WQLGLAFLPASVSYLIGTNLFGVLA) form a helical membrane-spanning segment. At 361 to 365 (NKMGR) the chain is on the cytoplasmic side. A helical transmembrane segment spans residues 366-386 (WLCSLIGMLVVGTSLLCVPLA). Topologically, residues 387 to 397 (HNIFGLIGPNA) are lumenal, vesicle. A helical transmembrane segment spans residues 398 to 418 (GLGLAIGMVDSSMMPIMGHLV). Over 419-422 (DLRH) the chain is Cytoplasmic. A helical transmembrane segment spans residues 423–443 (TSVYGSVYAIADVAFCMGFAI). Residues 444-448 (GPSTG) are Lumenal, vesicle-facing. A helical transmembrane segment spans residues 449–470 (GAIVKAIGFPWLMVITGVINIV). Topologically, residues 471 to 525 (YAPLCYYLRSPPAKEEKLAILSQDCPMETRMYATQKPTKEFPLGEDSDEEPDHEE) are cytoplasmic. The disordered stretch occupies residues 503 to 525 (ATQKPTKEFPLGEDSDEEPDHEE). The span at 513-525 (LGEDSDEEPDHEE) shows a compositional bias: acidic residues.

Belongs to the major facilitator superfamily. Vesicular transporter family. As to expression, expressed primarily in neuroendocrine tissues. Highly expressed in chromaffin cells of the adrenal medulla (at protein level). Detected in peripheral sympathetic ganglia (at protein level). Found in some paracrine cells in stomach and duodenum (at protein level). Expressed in substantia nigra. In terms of tissue distribution, expressed in gastrointestinal tract.

It is found in the cytoplasmic vesicle. The protein resides in the secretory vesicle membrane. The protein localises to the secretory vesicle. Its subcellular location is the synaptic vesicle membrane. It localises to the endoplasmic reticulum membrane. The enzyme catalyses serotonin(in) + 2 H(+)(out) = serotonin(out) + 2 H(+)(in). It carries out the reaction (R)-noradrenaline(in) + 2 H(+)(out) = (R)-noradrenaline(out) + 2 H(+)(in). The catalysed reaction is dopamine(in) + 2 H(+)(out) = dopamine(out) + 2 H(+)(in). With respect to regulation, strongly inhibited by reserpine. Also inhibited to a lesser extent by ketanserin and fenfluramine. Not significantly inhibited by tetrabenazine. Its function is as follows. Electrogenic antiporter that exchanges one cationic monoamine with two intravesicular protons across the membrane of secretory and synaptic vesicles. Uses the electrochemical proton gradient established by the V-type proton-pump ATPase to accumulate high concentrations of monoamines inside the vesicles prior to their release via exocytosis. Transports catecholamines and indolamines with higher affinity for serotonin. Regulates the transvesicular monoaminergic gradient that determines the quantal size. Mediates presynaptic monoaminergic vesicle transport in the amygdala and prefrontal brain regions related with emotion processing in response to environmental stimuli. In terms of biological role, unable to uptake serotonin. In Homo sapiens (Human), this protein is Chromaffin granule amine transporter (SLC18A1).